Consider the following 177-residue polypeptide: MSRVAKNPVAIPAGVEVKFGAADVTVKGALGSLSTALCNDVEVKLDNGQLTFAAKNDSKFARAMSGTLRALLNNMVNGVSKGFEKKLQLVGVGYRAQAQGDTLNLSLGFSHPVAHKMPAGIKVETPTQTEILVKGADKQLVGQVAAEIRAYRSPEPYKGKGVRYADEVVVLKETKKK.

Belongs to the universal ribosomal protein uL6 family. In terms of assembly, part of the 50S ribosomal subunit.

In terms of biological role, this protein binds to the 23S rRNA, and is important in its secondary structure. It is located near the subunit interface in the base of the L7/L12 stalk, and near the tRNA binding site of the peptidyltransferase center. The chain is Large ribosomal subunit protein uL6 from Chromobacterium violaceum (strain ATCC 12472 / DSM 30191 / JCM 1249 / CCUG 213 / NBRC 12614 / NCIMB 9131 / NCTC 9757 / MK).